A 143-amino-acid chain; its full sequence is Large ribosomal subunit protein uL11 (143 aa).

The protein belongs to the universal ribosomal protein uL11 family. In terms of assembly, part of the ribosomal stalk of the 50S ribosomal subunit. Interacts with L10 and the large rRNA to form the base of the stalk. L10 forms an elongated spine to which L12 dimers bind in a sequential fashion forming a multimeric L10(L12)X complex. In terms of processing, one or more lysine residues are methylated.

Functionally, forms part of the ribosomal stalk which helps the ribosome interact with GTP-bound translation factors. This Pseudomonas paraeruginosa (strain DSM 24068 / PA7) (Pseudomonas aeruginosa (strain PA7)) protein is Large ribosomal subunit protein uL11.